Consider the following 145-residue polypeptide: Hydrophobin-like protein 1 (145 aa).

Positions 1 to 20 are cleaved as a signal peptide; sequence MYLLQISISLLLLISTAATA. An N-linked (GlcNAc...) asparagine glycan is attached at N36. 4 disulfides stabilise this stretch: C61-C121, C71-C113, C72-C104, and C122-C139.

The protein resides in the secreted. The protein localises to the cell wall. Its function is as follows. Aerial growth, conidiation, and dispersal of filamentous fungi in the environment rely upon a capability of their secreting small amphipathic proteins called hydrophobins (HPBs) with low sequence identity. Class I can self-assemble into an outermost layer of rodlet bundles on aerial cell surfaces, conferring cellular hydrophobicity that supports fungal growth, development and dispersal; whereas Class II form highly ordered films at water-air interfaces through intermolecular interactions but contribute nothing to the rodlet structure. In Botryotinia fuckeliana, hydrophobins are not involved in conferring surface hydrophobicity to conidia and aerial hyphae and their function in sclerotia and fruiting bodies remains to be investigated. This chain is Hydrophobin-like protein 1, found in Botryotinia fuckeliana (strain B05.10) (Noble rot fungus).